A 437-amino-acid polypeptide reads, in one-letter code: MKLWGGRFKNAESKLMEDFNSSLKFDKRLYKEDIKGSIAHVKMLSKCGILEGEEKLIIIDGLISILDDIENGVLKIEGDYEDIHSFIEINLINRVGDVGKKLHTGRSRNDQVAVDMRMYAKSITFEIIEYINELLEVITNLADSNDVIMPGYTHLQRAQVIKFKLHMMAYYSMFNRDKKRLLSDIEVMDESPLGCGALAGTTYNIDREFTARELGFKKCVDNFMDGVSDRDYLISLLSSFSLIMMHLSRLSEELILWSSKEFDFVKISDEFSTGSSIMPQKKNPDAAELIRGKTGRVYGSLMGLLTTMKGIPLAYNKDMQEDKEGFFDAVDTVKKSLKVMSGMLSTLELKKDNMYNAVKKGFLNATEAADYLVNKGMAFRDAHGVIGAIVLYCEENKKAIEDLPLEKLKTFCDLFDEDIYDFIEYSNSLKRGIKINI.

This sequence belongs to the lyase 1 family. Argininosuccinate lyase subfamily.

The protein resides in the cytoplasm. The enzyme catalyses 2-(N(omega)-L-arginino)succinate = fumarate + L-arginine. It participates in amino-acid biosynthesis; L-arginine biosynthesis; L-arginine from L-ornithine and carbamoyl phosphate: step 3/3. The chain is Argininosuccinate lyase from Clostridium novyi (strain NT).